Reading from the N-terminus, the 345-residue chain is Calcium uniporter regulatory subunit MCUb, mitochondrial (345 aa).

The transit peptide at 1–44 (MPGALSGRRMLPSGLCLGRWQLLRTIRARGRGDPRELPSTPQVL) directs the protein to the mitochondrion. Positions 188–221 (EIQKRRERHLMAKIDHLQEQLRPLEQVKAAIEAR) form a coiled coil. 2 consecutive transmembrane segments (helical) span residues 229-249 (LLWA…WLTW) and 259-279 (PVTF…FIIT). Positions 306-334 (FDVEQYNKLKEDLAEATESLESVRRSLRL) form a coiled coil.

Belongs to the MCU (TC 1.A.77) family. As to quaternary structure, homooligomer. Associates with the uniplex complex, composed of MCU, MICU1, MICU2 and EMRE/SMDT1, inhibiting its activity. Detected in lung, brain and heart, and at lower levels in white fat, skeletal muscle and spleen. Detected at very low levels in kidney and liver. Highly expressed in macrophages during the progression of skeletal muscle regeneration.

Its subcellular location is the mitochondrion inner membrane. Negative regulator of the mitochondrial calcium uniporter (MCU), a channel that mediates calcium uptake into the mitochondrial matrix. MCUB is required to limit mitochondrial calcium overload during stress. Acts as a dominant-negative regulator that displaces MCU from the functional uniplex complex and thereby decreases the association of calcium sensors MICU1 and MICU2, preventing channel gating. Mitochondrial calcium homeostasis plays key roles in mitochondrial metabolism. Acts as an important regulator of mitochondrial metabolism in response to stress in muscle cells: induced in response to fasting, leading to restrict mitochondrial calcium uptake, resulting in reprogramming of mitochondria toward fatty acid oxidation preference. Acts as a regulator of macrophage polarization during skeletal muscle regeneration: inhibition of mitochondrial calcium uptake drives differentiation of macrophages with anti-inflammatory profile, promoting the differentiation and fusion of satellite cells. This chain is Calcium uniporter regulatory subunit MCUb, mitochondrial, found in Mus musculus (Mouse).